The chain runs to 105 residues: Cell division protein FtsB (105 aa).

Residues 1–3 (MRI) are Cytoplasmic-facing. A helical membrane pass occupies residues 4–21 (VIYSMLVLLIAIQYPLWL). Topologically, residues 22–105 (GKGGWLKVYE…DTAKASTVKQ (84 aa)) are periplasmic. A coiled-coil region spans residues 32 to 60 (MEKQVELQEAKNSLLALRNAKLEGDVKDL).

It belongs to the FtsB family. As to quaternary structure, part of a complex composed of FtsB, FtsL and FtsQ.

Its subcellular location is the cell inner membrane. Essential cell division protein. May link together the upstream cell division proteins, which are predominantly cytoplasmic, with the downstream cell division proteins, which are predominantly periplasmic. This chain is Cell division protein FtsB, found in Polynucleobacter asymbioticus (strain DSM 18221 / CIP 109841 / QLW-P1DMWA-1) (Polynucleobacter necessarius subsp. asymbioticus).